Consider the following 104-residue polypeptide: Large ribosomal subunit protein uL24 (104 aa).

Belongs to the universal ribosomal protein uL24 family. As to quaternary structure, part of the 50S ribosomal subunit.

One of two assembly initiator proteins, it binds directly to the 5'-end of the 23S rRNA, where it nucleates assembly of the 50S subunit. Functionally, one of the proteins that surrounds the polypeptide exit tunnel on the outside of the subunit. The protein is Large ribosomal subunit protein uL24 of Escherichia coli O81 (strain ED1a).